A 215-amino-acid chain; its full sequence is Peptide methionine sulfoxide reductase MsrA (215 aa).

Cys-57 is an active-site residue.

It belongs to the MsrA Met sulfoxide reductase family.

The catalysed reaction is L-methionyl-[protein] + [thioredoxin]-disulfide + H2O = L-methionyl-(S)-S-oxide-[protein] + [thioredoxin]-dithiol. The enzyme catalyses [thioredoxin]-disulfide + L-methionine + H2O = L-methionine (S)-S-oxide + [thioredoxin]-dithiol. In terms of biological role, has an important function as a repair enzyme for proteins that have been inactivated by oxidation. Catalyzes the reversible oxidation-reduction of methionine sulfoxide in proteins to methionine. This is Peptide methionine sulfoxide reductase MsrA from Saccharophagus degradans (strain 2-40 / ATCC 43961 / DSM 17024).